The sequence spans 621 residues: (-)-beta-phellandrene synthase 1, chloroplastic (621 aa).

A chloroplast-targeting transit peptide spans 1–49 (MALALVSVAPLVSMRRSLFSSPYELKSIDKTIPNLVMCRKRMSGTPSIR). Mg(2+) contacts are provided by aspartate 372, aspartate 376, and aspartate 524. Residues 372 to 376 (DDIYD) carry the DDXXD motif motif.

It belongs to the terpene synthase family. Tpsd subfamily. It depends on Mg(2+) as a cofactor. Mn(2+) serves as cofactor.

It is found in the plastid. Its subcellular location is the chloroplast. It catalyses the reaction (2E)-geranyl diphosphate = (-)-beta-phellandrene + diphosphate. The protein operates within terpene metabolism; oleoresin biosynthesis. It participates in secondary metabolite biosynthesis; terpenoid biosynthesis. In terms of biological role, monoterpene synthase (TPS) involved in the biosynthesis of monoterpene natural products included in conifer oleoresin secretions and volatile emissions; these compounds contribute to biotic and abiotic stress defense against herbivores and pathogens. Catalyzes the conversion of (2E)-geranyl diphosphate (GPP) to (-)-beta-phellandrene and, to a lower extent, to (-)-alpha-phellandrene. The sequence is that of (-)-beta-phellandrene synthase 1, chloroplastic from Pinus contorta (Shore pine).